The following is a 272-amino-acid chain: Phosphate import ATP-binding protein PstB 1 (272 aa).

Residues 26–267 (ISIENLNLFY…PMKKQTEDYI (242 aa)) enclose the ABC transporter domain. 58–65 (GPSGCGKS) lines the ATP pocket.

The protein belongs to the ABC transporter superfamily. Phosphate importer (TC 3.A.1.7) family. The complex is composed of two ATP-binding proteins (PstB), two transmembrane proteins (PstC and PstA) and a solute-binding protein (PstS).

It is found in the cell inner membrane. The catalysed reaction is phosphate(out) + ATP + H2O = ADP + 2 phosphate(in) + H(+). Functionally, part of the ABC transporter complex PstSACB involved in phosphate import. Responsible for energy coupling to the transport system. This is Phosphate import ATP-binding protein PstB 1 from Vibrio parahaemolyticus serotype O3:K6 (strain RIMD 2210633).